A 106-amino-acid chain; its full sequence is MVNVPKTRRTYCKGKDCRKHTQHKVTQYKAGKASLFAQGKRRYDRKQSGFGGQTKPVFHKKAKTTKKVVLRLECVVCKTKAQLSLKRCKHFELGGDKKQKGQALQF.

It belongs to the eukaryotic ribosomal protein eL42 family.

The chain is Large ribosomal subunit protein eL42 (RPL44) from Meyerozyma guilliermondii (strain ATCC 6260 / CBS 566 / DSM 6381 / JCM 1539 / NBRC 10279 / NRRL Y-324) (Yeast).